We begin with the raw amino-acid sequence, 394 residues long: uncharacterized protein (394 aa).

Asparagine 3, asparagine 14, asparagine 20, and asparagine 25 each carry an N-linked (GlcNAc...) asparagine glycan. The next 6 helical transmembrane spans lie at 64-84 (AVGI…LVNI), 101-121 (FIWI…YIDV), 133-153 (IFSF…WHVI), 180-200 (IFVV…MGFF), 228-248 (VLLA…SFVY), and 256-276 (WVGM…QFLE). N-linked (GlcNAc...) asparagine glycosylation is found at asparagine 283 and asparagine 286. A helical membrane pass occupies residues 291–311 (AGLVFGLGFCPPLILAYTVCI). A glycan (N-linked (GlcNAc...) asparagine) is linked at asparagine 344.

It is found in the membrane. This is an uncharacterized protein from Schizosaccharomyces pombe (strain 972 / ATCC 24843) (Fission yeast).